A 285-amino-acid chain; its full sequence is Energy-coupling factor transporter ATP-binding protein EcfA2 (285 aa).

The 243-residue stretch at I3–S245 folds into the ABC transporter domain. Residue G40–S47 participates in ATP binding.

The protein belongs to the ABC transporter superfamily. Energy-coupling factor EcfA family. In terms of assembly, forms a stable energy-coupling factor (ECF) transporter complex composed of 2 membrane-embedded substrate-binding proteins (S component), 2 ATP-binding proteins (A component) and 2 transmembrane proteins (T component).

It is found in the cell membrane. Functionally, ATP-binding (A) component of a common energy-coupling factor (ECF) ABC-transporter complex. Unlike classic ABC transporters this ECF transporter provides the energy necessary to transport a number of different substrates. The polypeptide is Energy-coupling factor transporter ATP-binding protein EcfA2 (Lactobacillus acidophilus (strain ATCC 700396 / NCK56 / N2 / NCFM)).